A 374-amino-acid polypeptide reads, in one-letter code: PqqA peptide cyclase (374 aa).

A Radical SAM core domain is found at 13-230; the sequence is VPAPIAMLAE…EAEARLRGTL (218 aa). Residues cysteine 27, cysteine 31, and cysteine 34 each contribute to the [4Fe-4S] cluster site.

This sequence belongs to the radical SAM superfamily. PqqE family. As to quaternary structure, interacts with PqqD. The interaction is necessary for activity of PqqE. [4Fe-4S] cluster serves as cofactor.

The enzyme catalyses [PQQ precursor protein] + S-adenosyl-L-methionine = E-Y cross-linked-[PQQ precursor protein] + 5'-deoxyadenosine + L-methionine + H(+). It functions in the pathway cofactor biosynthesis; pyrroloquinoline quinone biosynthesis. In terms of biological role, catalyzes the cross-linking of a glutamate residue and a tyrosine residue in the PqqA protein as part of the biosynthesis of pyrroloquinoline quinone (PQQ). This is PqqA peptide cyclase from Ruegeria pomeroyi (strain ATCC 700808 / DSM 15171 / DSS-3) (Silicibacter pomeroyi).